The following is a 212-amino-acid chain: Large ribosomal subunit protein uL3 (212 aa).

Gln153 carries the N5-methylglutamine modification.

It belongs to the universal ribosomal protein uL3 family. As to quaternary structure, part of the 50S ribosomal subunit. Forms a cluster with proteins L14 and L19. In terms of processing, methylated by PrmB.

In terms of biological role, one of the primary rRNA binding proteins, it binds directly near the 3'-end of the 23S rRNA, where it nucleates assembly of the 50S subunit. This chain is Large ribosomal subunit protein uL3, found in Dechloromonas aromatica (strain RCB).